The chain runs to 217 residues: Large ribosomal subunit protein uL3 (217 aa).

The protein belongs to the universal ribosomal protein uL3 family. In terms of assembly, part of the 50S ribosomal subunit. Forms a cluster with proteins L14 and L19.

One of the primary rRNA binding proteins, it binds directly near the 3'-end of the 23S rRNA, where it nucleates assembly of the 50S subunit. In Mycobacterium bovis (strain ATCC BAA-935 / AF2122/97), this protein is Large ribosomal subunit protein uL3.